The following is a 309-amino-acid chain: MPSLEDYRIPYPAAGPCQKRTVIYLPQQDSAVEQHHLRVQLIPGRHVRCEDGCFYQLTGTVSEETLQSWGYPYYVVTLDDIYPAQCSPSDPANPRTFVPLRESPMIPYNSKRPIVVYVPEDAEVRYRVWCSDVLQVQESQQELEAPAVSQSCPVPVRERQNNPEGHAHPVVVHSVESPEVSGHKDGDQPMKKSSKLKQSCSNSSRSLKHSASGSSPKNTPLFSRESVPPEHSLSAAQQRRRSNENSAIDETGGGASRKKRSDSTSSRKDDQDSGYEKKVKNLWNRARGNSSPKRSASPKKSGRDSRRNS.

Residues Gln140 to Ser309 form a disordered region. Positions Val156–Ala167 are enriched in basic and acidic residues. Low complexity predominate over residues His168–Val180. Residues Ser181–Met190 show a composition bias toward basic and acidic residues. Residues Leu196–Arg205 show a composition bias toward low complexity. The segment covering His209–Leu221 has biased composition (polar residues). The segment covering Ser261–Val279 has biased composition (basic and acidic residues). Residues Ser290–Lys299 show a composition bias toward low complexity.

Belongs to the protease inhibitor I11 (ecotin) family.

The sequence is that of Ecotin-like protein 3 from Leishmania braziliensis.